The following is a 457-amino-acid chain: tRNA-2-methylthio-N(6)-dimethylallyladenosine synthase (457 aa).

In terms of domain architecture, MTTase N-terminal spans 3-120 (KKVYVKTFGC…LPQMIDARRA (118 aa)). The [4Fe-4S] cluster site is built by Cys-12, Cys-49, Cys-83, Cys-157, Cys-161, and Cys-164. The Radical SAM core domain maps to 143 to 377 (RVEGPSAFVS…QATIEENVAR (235 aa)). One can recognise a TRAM domain in the interval 380-447 (QSMVGKVERI…PHSLRGELVI (68 aa)).

This sequence belongs to the methylthiotransferase family. MiaB subfamily. In terms of assembly, monomer. [4Fe-4S] cluster serves as cofactor.

The protein localises to the cytoplasm. It catalyses the reaction N(6)-dimethylallyladenosine(37) in tRNA + (sulfur carrier)-SH + AH2 + 2 S-adenosyl-L-methionine = 2-methylsulfanyl-N(6)-dimethylallyladenosine(37) in tRNA + (sulfur carrier)-H + 5'-deoxyadenosine + L-methionine + A + S-adenosyl-L-homocysteine + 2 H(+). Catalyzes the methylthiolation of N6-(dimethylallyl)adenosine (i(6)A), leading to the formation of 2-methylthio-N6-(dimethylallyl)adenosine (ms(2)i(6)A) at position 37 in tRNAs that read codons beginning with uridine. This chain is tRNA-2-methylthio-N(6)-dimethylallyladenosine synthase, found in Burkholderia cenocepacia (strain ATCC BAA-245 / DSM 16553 / LMG 16656 / NCTC 13227 / J2315 / CF5610) (Burkholderia cepacia (strain J2315)).